The sequence spans 166 residues: Orotate phosphoribosyltransferase (166 aa).

Residues Arg83, Lys84, Arg86, His88, and 108–116 (EDVVTTGNS) each bind 5-phospho-alpha-D-ribose 1-diphosphate. Orotate contacts are provided by Thr112 and Arg140.

Belongs to the purine/pyrimidine phosphoribosyltransferase family. PyrE subfamily. Homodimer. Requires Mg(2+) as cofactor.

The enzyme catalyses orotidine 5'-phosphate + diphosphate = orotate + 5-phospho-alpha-D-ribose 1-diphosphate. It functions in the pathway pyrimidine metabolism; UMP biosynthesis via de novo pathway; UMP from orotate: step 1/2. In terms of biological role, catalyzes the transfer of a ribosyl phosphate group from 5-phosphoribose 1-diphosphate to orotate, leading to the formation of orotidine monophosphate (OMP). In Thermoplasma volcanium (strain ATCC 51530 / DSM 4299 / JCM 9571 / NBRC 15438 / GSS1), this protein is Orotate phosphoribosyltransferase.